Reading from the N-terminus, the 286-residue chain is NAD kinase (286 aa).

The active-site Proton acceptor is the D74. NAD(+) contacts are provided by residues 74–75 (DG), 148–149 (ND), D178, A186, 189–194 (TAYNLS), and Q244.

This sequence belongs to the NAD kinase family. The cofactor is a divalent metal cation.

The protein resides in the cytoplasm. The catalysed reaction is NAD(+) + ATP = ADP + NADP(+) + H(+). Involved in the regulation of the intracellular balance of NAD and NADP, and is a key enzyme in the biosynthesis of NADP. Catalyzes specifically the phosphorylation on 2'-hydroxyl of the adenosine moiety of NAD to yield NADP. This chain is NAD kinase, found in Campylobacter jejuni subsp. jejuni serotype O:6 (strain 81116 / NCTC 11828).